We begin with the raw amino-acid sequence, 505 residues long: Glucan endo-1,3-beta-glucosidase 2 (505 aa).

An N-terminal signal peptide occupies residues 1–20 (MASLLHLLLLSLSLLVLASA). A glycan (N-linked (GlcNAc...) asparagine) is linked at Asn-97. Glu-125 functions as the Proton donor in the catalytic mechanism. Asn-180 and Asn-262 each carry an N-linked (GlcNAc...) asparagine glycan. The active-site Nucleophile is Glu-272. N-linked (GlcNAc...) asparagine glycans are attached at residues Asn-304, Asn-361, and Asn-365. The cysteines at positions 369 and 432 are disulfide-linked. N-linked (GlcNAc...) asparagine glycosylation is found at Asn-461, Asn-466, and Asn-473. Ser-477 carries GPI-anchor amidated serine lipidation. Positions 478–505 (SGIRSDLYYSRGIWSILTVMILNVANIL) are cleaved as a propeptide — removed in mature form.

It belongs to the glycosyl hydrolase 17 family. In terms of processing, contains two additional disulfide bonds.

It is found in the cell membrane. It carries out the reaction Hydrolysis of (1-&gt;3)-beta-D-glucosidic linkages in (1-&gt;3)-beta-D-glucans.. The chain is Glucan endo-1,3-beta-glucosidase 2 from Arabidopsis thaliana (Mouse-ear cress).